The chain runs to 141 residues: Bombinins BLP-7/H-BO (141 aa).

An N-terminal signal peptide occupies residues 1 to 18; that stretch reads MNFKYIIAVSFLIASTYA. Residues 19–43 constitute a propeptide that is removed on maturation; sequence RSVKNDEQSLSQRDVLDEESLREIR. Residue Asn70 is modified to Asparagine amide. A propeptide spanning residues 74 to 123 is cleaved from the precursor; that stretch reads TAEEHEVMKRLEAVMRDLDSLDHPEEASEKETRGFNQEEIANLFTKKEKR. Leucine amide is present on Leu140.

This sequence belongs to the bombinin family. Expressed by the skin glands.

It localises to the secreted. Antimicrobial peptide with activity against Gram-positive and -negative bacteria and fungi. Shows activity against P.acnes (MIC=5 uM), E.coli (MIC=5-6.3 uM), S.aureus (MIC=5-6.3 uM), M.luteus, S.cerevisiae and C.albicans (MIC=10-12.5 uM). Also reduces the production of interleukin (IL)-8 and granulocyte-macrophage colony stimulating factor (CSF2) in normal human epidermal keratinocytes (NHEKs). Shows anticancer activity against three human hepatoma cell lines. In vivo, using the rat ear edema model, suppress P.acnes-induced skin inflammation, significantly reducing the ear thickness. Shows weak hemolytic activity against human erythrocytes. Functionally, shows weak antimicrobial activity (tested on E.coli, S.aureus and C.albicans). Shows high hemolytic activity against human erythrocytes (38% erythrocyte lysis at 80.0 uM, and up to 85% at 159.7 uM). The chain is Bombinins BLP-7/H-BO from Bombina orientalis (Oriental fire-bellied toad).